A 474-amino-acid chain; its full sequence is Aspartyl/glutamyl-tRNA(Asn/Gln) amidotransferase subunit B (474 aa).

Belongs to the GatB/GatE family. GatB subfamily. Heterotrimer of A, B and C subunits.

It carries out the reaction L-glutamyl-tRNA(Gln) + L-glutamine + ATP + H2O = L-glutaminyl-tRNA(Gln) + L-glutamate + ADP + phosphate + H(+). The enzyme catalyses L-aspartyl-tRNA(Asn) + L-glutamine + ATP + H2O = L-asparaginyl-tRNA(Asn) + L-glutamate + ADP + phosphate + 2 H(+). Allows the formation of correctly charged Asn-tRNA(Asn) or Gln-tRNA(Gln) through the transamidation of misacylated Asp-tRNA(Asn) or Glu-tRNA(Gln) in organisms which lack either or both of asparaginyl-tRNA or glutaminyl-tRNA synthetases. The reaction takes place in the presence of glutamine and ATP through an activated phospho-Asp-tRNA(Asn) or phospho-Glu-tRNA(Gln). In Limosilactobacillus fermentum (strain NBRC 3956 / LMG 18251) (Lactobacillus fermentum), this protein is Aspartyl/glutamyl-tRNA(Asn/Gln) amidotransferase subunit B.